The following is a 240-amino-acid chain: Intestine-specific homeobox (240 aa).

The disordered stretch occupies residues 36–82 (PTERRSLPRPQSICKEDSRQTTIPGSKLERPPQDQPQEEKKNKRRVR). The segment covering 62–76 (KLERPPQDQPQEEKK) has biased composition (basic and acidic residues). The segment at residues 78–137 (KRRVRTTFTTEQLQELEKLFHFTHYPDIHVRSQLASRINLPEARVQIWFQNQRAKWRKQE) is a DNA-binding region (homeobox).

In terms of tissue distribution, expressed in intestinal epithelial cells from the duodenum to the proximal colon.

It localises to the nucleus. In terms of biological role, transcription factor that regulates gene expression in intestine. May participate in vitamin A metabolism most likely by regulating BCO1 expression in the intestine. This Mus musculus (Mouse) protein is Intestine-specific homeobox (Isx).